The chain runs to 311 residues: Aspartate carbamoyltransferase catalytic subunit (311 aa).

Arginine 55 and threonine 56 together coordinate carbamoyl phosphate. L-aspartate is bound at residue lysine 84. Carbamoyl phosphate contacts are provided by arginine 105, histidine 133, and glutamine 136. L-aspartate-binding residues include arginine 166 and arginine 229. Carbamoyl phosphate is bound by residues leucine 268 and proline 269.

It belongs to the aspartate/ornithine carbamoyltransferase superfamily. ATCase family. As to quaternary structure, heterododecamer (2C3:3R2) of six catalytic PyrB chains organized as two trimers (C3), and six regulatory PyrI chains organized as three dimers (R2).

It catalyses the reaction carbamoyl phosphate + L-aspartate = N-carbamoyl-L-aspartate + phosphate + H(+). The protein operates within pyrimidine metabolism; UMP biosynthesis via de novo pathway; (S)-dihydroorotate from bicarbonate: step 2/3. In terms of biological role, catalyzes the condensation of carbamoyl phosphate and aspartate to form carbamoyl aspartate and inorganic phosphate, the committed step in the de novo pyrimidine nucleotide biosynthesis pathway. The protein is Aspartate carbamoyltransferase catalytic subunit of Alkaliphilus metalliredigens (strain QYMF).